Here is a 578-residue protein sequence, read N- to C-terminus: Adhesion G protein-coupled receptor A1 (578 aa).

Residues 1–22 (MTQWDLKTVLSLPQYPGEFLHP) are Extracellular-facing. Residues 23 to 43 (VVYACTAVMLLCLLASVITYI) traverse the membrane as a helical segment. The Cytoplasmic portion of the chain corresponds to 44 to 56 (LHQSAIRISRKGR). A helical transmembrane segment spans residues 57–77 (HALLNFCFHAALTFTVFAGGI). Over 78 to 87 (NRTQHPILCQ) the chain is Extracellular. Residues 88–108 (AVGIALHYSTLSTMLWIGVTA) form a helical membrane-spanning segment. Residues 109-137 (RNIYKQVTKKALPCPGADQPPYPKQPLLR) are Cytoplasmic-facing. The helical transmembrane segment at 138–158 (FYLISGGVPFIICGVTAATNI) threads the bilayer. The Extracellular segment spans residues 159 to 178 (RNYGTEDEDVAYCWMAWEPS). A helical transmembrane segment spans residues 179–199 (LGAFYGPAAFIALVTCVYFLC). The Cytoplasmic portion of the chain corresponds to 200-262 (TYVQLRRHPE…NEHSFKAQLR (63 aa)). Positions 216-236 (ERTEEQQRLAVPESGHRHGVR) are disordered. Residues 263–283 (AAAFTLFLFTATWTFGALAVS) form a helical membrane-spanning segment. Over 284-289 (QGHFLD) the chain is Extracellular. A helical membrane pass occupies residues 290-310 (MIFSCLYGAFCVTLGLFVLIH). Disordered regions lie at residues 463-486 (PSSLDGSPHSSRSESPTSSLEGPM) and 537-578 (SLPF…ETTV). Over residues 469 to 481 (SPHSSRSESPTSS) the composition is skewed to low complexity. A compositionally biased stretch (polar residues) spans 537 to 548 (SLPFGGPSQNGL).

It belongs to the G-protein coupled receptor 2 family. Adhesion G-protein coupled receptor (ADGR) subfamily. In terms of tissue distribution, predominantly expressed in CNS.

It localises to the membrane. The polypeptide is Adhesion G protein-coupled receptor A1 (Mus musculus (Mouse)).